A 241-amino-acid polypeptide reads, in one-letter code: Triosephosphate isomerase (241 aa).

Position 8–10 (8–10 (NWK)) interacts with substrate. H93 functions as the Electrophile in the catalytic mechanism. The active-site Proton acceptor is the E163. Substrate contacts are provided by residues G169, S205, and 226-227 (GG).

The protein belongs to the triosephosphate isomerase family. As to quaternary structure, homodimer.

Its subcellular location is the cytoplasm. It carries out the reaction D-glyceraldehyde 3-phosphate = dihydroxyacetone phosphate. Its pathway is carbohydrate biosynthesis; gluconeogenesis. The protein operates within carbohydrate degradation; glycolysis; D-glyceraldehyde 3-phosphate from glycerone phosphate: step 1/1. Involved in the gluconeogenesis. Catalyzes stereospecifically the conversion of dihydroxyacetone phosphate (DHAP) to D-glyceraldehyde-3-phosphate (G3P). In Bdellovibrio bacteriovorus (strain ATCC 15356 / DSM 50701 / NCIMB 9529 / HD100), this protein is Triosephosphate isomerase.